Here is a 279-residue protein sequence, read N- to C-terminus: Ribonuclease T2 protein rnst-2 (279 aa).

The first 17 residues, 1-17 (MKLLLLLCISCIPLAYS), serve as a signal peptide directing secretion. Cys-37 and Cys-48 are oxidised to a cystine. His-60 is a catalytic residue. N-linked (GlcNAc...) asparagine glycosylation is present at Asn-68. Catalysis depends on residues Glu-114 and His-118. Cysteines 200 and 210 form a disulfide.

Belongs to the RNase T2 family. Expressed in the pharynx, hypodermis, muscle cells, sheath cells, intestinal cells, the vulva and tail regions.

The protein resides in the lysosome. The enzyme catalyses a ribonucleotidyl-ribonucleotide-RNA + H2O = a 3'-end 3'-phospho-ribonucleotide-RNA + a 5'-end dephospho-ribonucleoside-RNA + H(+). Its function is as follows. Probable endoribonuclease involved in the autophagy-mediated degradation of ribosomal RNA and ribosomal proteins in lysosomes. The chain is Ribonuclease T2 protein rnst-2 from Caenorhabditis elegans.